A 498-amino-acid polypeptide reads, in one-letter code: NADH-quinone oxidoreductase subunit N (498 aa).

The next 14 helical transmembrane spans lie at 10–30 (LMPLAPVMIVALTAVVVMLLI), 44–64 (VVGLNLAALYILLELFGGKFV), 68–88 (VMGMFMVDPFTMFYQFMILVA), 109–129 (ELYLLLLASVAGAMLMVASSH), 130–150 (YASFFISLELMSIPVYGLLAY), 164–184 (YLVLSATASAMLLMGMAYIYA), 207–227 (VLLGLALIIFAVAFKLSLAPF), 239–259 (PAPMATFLATAAKVATIGLFV), 273–293 (LVTVLTIIAVLSILVGNLLAV), 301–321 (ILGYSSIAHFGYLLIALISMT), 328–348 (VTVYVVTYVLTTIGAFGAVAL), 377–397 (ATLTVMMLSLAGIPLTAGFIG), 412–434 (FLAAMIIVGSGIGLYYYLRVMVV), and 458–478 (LMVLAAAALVIILGVYPDPMI).

It belongs to the complex I subunit 2 family. NDH-1 is composed of 14 different subunits. Subunits NuoA, H, J, K, L, M, N constitute the membrane sector of the complex.

Its subcellular location is the cell inner membrane. The catalysed reaction is a quinone + NADH + 5 H(+)(in) = a quinol + NAD(+) + 4 H(+)(out). Functionally, NDH-1 shuttles electrons from NADH, via FMN and iron-sulfur (Fe-S) centers, to quinones in the respiratory chain. The immediate electron acceptor for the enzyme in this species is believed to be ubiquinone. Couples the redox reaction to proton translocation (for every two electrons transferred, four hydrogen ions are translocated across the cytoplasmic membrane), and thus conserves the redox energy in a proton gradient. The sequence is that of NADH-quinone oxidoreductase subunit N from Acinetobacter baumannii (strain AB0057).